The sequence spans 291 residues: Tryptophan synthase alpha chain (291 aa).

Catalysis depends on proton acceptor residues Glu-69 and Asp-80.

This sequence belongs to the TrpA family. In terms of assembly, tetramer of two alpha and two beta chains.

The enzyme catalyses (1S,2R)-1-C-(indol-3-yl)glycerol 3-phosphate + L-serine = D-glyceraldehyde 3-phosphate + L-tryptophan + H2O. It functions in the pathway amino-acid biosynthesis; L-tryptophan biosynthesis; L-tryptophan from chorismate: step 5/5. Its function is as follows. The alpha subunit is responsible for the aldol cleavage of indoleglycerol phosphate to indole and glyceraldehyde 3-phosphate. The polypeptide is Tryptophan synthase alpha chain (Bifidobacterium longum (strain NCC 2705)).